Here is a 139-residue protein sequence, read N- to C-terminus: Nucleoside diphosphate kinase (139 aa).

ATP-binding residues include Lys11, Phe59, Arg87, Thr93, Arg104, and Asn114. His117 functions as the Pros-phosphohistidine intermediate in the catalytic mechanism.

This sequence belongs to the NDK family. Homotetramer. Mg(2+) serves as cofactor.

Its subcellular location is the cytoplasm. The enzyme catalyses a 2'-deoxyribonucleoside 5'-diphosphate + ATP = a 2'-deoxyribonucleoside 5'-triphosphate + ADP. The catalysed reaction is a ribonucleoside 5'-diphosphate + ATP = a ribonucleoside 5'-triphosphate + ADP. In terms of biological role, major role in the synthesis of nucleoside triphosphates other than ATP. The ATP gamma phosphate is transferred to the NDP beta phosphate via a ping-pong mechanism, using a phosphorylated active-site intermediate. The protein is Nucleoside diphosphate kinase of Wolbachia pipientis wMel.